The sequence spans 257 residues: Adenylate kinase (257 aa).

52 to 57 (GAGKGT) contributes to the ATP binding site. The segment at 72 to 101 (ATGDMLRSQVAKKTELGKEAKKIMDQGGLV) is NMP. Residues Thr-73, Arg-78, 99–101 (GLV), 128–131 (GFPR), and Gln-135 contribute to the AMP site. The tract at residues 169–206 (GRLVHPASGRSYHKIFNPPKNEMLDDITGEPLIQRSDD) is LID. ATP is bound by residues Arg-170 and 179–180 (SY). Residues Arg-203 and Arg-214 each coordinate AMP. Gln-242 contributes to the ATP binding site.

Belongs to the adenylate kinase family. AK2 subfamily. In terms of assembly, monomer.

The protein localises to the cytoplasm. Its subcellular location is the cytosol. The protein resides in the mitochondrion intermembrane space. The enzyme catalyses AMP + ATP = 2 ADP. Functionally, catalyzes the reversible transfer of the terminal phosphate group between ATP and AMP. Plays an important role in cellular energy homeostasis and in adenine nucleotide metabolism. Adenylate kinase activity is critical for regulation of the phosphate utilization and the AMP de novo biosynthesis pathways. The chain is Adenylate kinase (adk1) from Aspergillus clavatus (strain ATCC 1007 / CBS 513.65 / DSM 816 / NCTC 3887 / NRRL 1 / QM 1276 / 107).